The sequence spans 257 residues: Imidazole glycerol phosphate synthase subunit HisF (257 aa).

Catalysis depends on residues aspartate 11 and aspartate 130.

It belongs to the HisA/HisF family. Heterodimer of HisH and HisF.

It is found in the cytoplasm. It catalyses the reaction 5-[(5-phospho-1-deoxy-D-ribulos-1-ylimino)methylamino]-1-(5-phospho-beta-D-ribosyl)imidazole-4-carboxamide + L-glutamine = D-erythro-1-(imidazol-4-yl)glycerol 3-phosphate + 5-amino-1-(5-phospho-beta-D-ribosyl)imidazole-4-carboxamide + L-glutamate + H(+). It participates in amino-acid biosynthesis; L-histidine biosynthesis; L-histidine from 5-phospho-alpha-D-ribose 1-diphosphate: step 5/9. In terms of biological role, IGPS catalyzes the conversion of PRFAR and glutamine to IGP, AICAR and glutamate. The HisF subunit catalyzes the cyclization activity that produces IGP and AICAR from PRFAR using the ammonia provided by the HisH subunit. This is Imidazole glycerol phosphate synthase subunit HisF from Prochlorococcus marinus (strain SARG / CCMP1375 / SS120).